The primary structure comprises 73 residues: MKAGIHPEYKAVNATCSCGNSFVFNSTLDKDSIHLDVCDKCHPFYTGKQRIVDTGGRVDRFNKRFGALSSGKK.

C16, C18, C38, and C41 together coordinate Zn(2+).

The protein belongs to the bacterial ribosomal protein bL31 family. Type A subfamily. Part of the 50S ribosomal subunit. Zn(2+) serves as cofactor.

In terms of biological role, binds the 23S rRNA. This is Large ribosomal subunit protein bL31 from Vibrio vulnificus (strain YJ016).